The chain runs to 610 residues: Fimbrin (610 aa).

2 consecutive EF-hand domains span residues 7-42 and 43-78; these read SEIS…CGEK and VTGV…ARQH. Ca(2+)-binding residues include D20, N22, D24, Q26, E31, D56, D58, N60, S62, and E67. Actin-binding regions lie at residues 102–365 and 366–608; these read YSGS…NTHP and ALEP…QVEM. 4 Calponin-homology (CH) domains span residues 116 to 232, 260 to 365, 379 to 488, and 501 to 608; these read DEEK…KIGL, LPVE…NTHP, TREE…RGHV, and PIAD…QVEM.

Its function is as follows. Binds to actin. The protein is Fimbrin (fimA) of Dictyostelium discoideum (Social amoeba).